The primary structure comprises 235 residues: Protein CIST1 (235 aa).

Residues 1-31 form the signal peptide; the sequence is MASSQPPLPPPPPPLLLLALLLLLKVSDTSS. Composition is skewed to low complexity over residues 28-61 and 76-110; these read DTSS…SSPT and STSH…SQPE. Residues 28–159 form a disordered region; the sequence is DTSSSVSTAT…TGPPSVSLAT (132 aa). The Extracellular segment spans residues 32 to 184; it reads SVSTATSTAS…GVPRLHRNPG (153 aa). N45 carries an N-linked (GlcNAc...) asparagine glycan. Polar residues predominate over residues 114-136; that stretch reads HPSSGSPSSEHTVTSPSLGSVSL. The chain crosses the membrane as a helical span at residues 185-205; it reads VVVAVCLLVSALLIGGAIMAV. Residues 206–235 lie on the Cytoplasmic side of the membrane; it reads RRCHNGVSEFQKLDEGLVSRRSSSAHHTLP.

In terms of tissue distribution, highly expressed in large intestine, small intestine, rumen, and kidney tissues.

It localises to the membrane. The protein is Protein CIST1 (CIST1) of Bos taurus (Bovine).